The sequence spans 181 residues: Early E3 20.3 kDa glycoprotein (181 aa).

N-linked (GlcNAc...) asparagine; by host glycosylation is found at Asn29, Asn57, Asn70, and Asn75.

It belongs to the adenoviridae E3_20 family.

In terms of biological role, E3 proteins seem to be dispensable for virus growth in tissue culture cells. They are potentially important for virus growth under special conditions; E3 region may help adenoviruses to evade the immune surveillance of the host. The chain is Early E3 20.3 kDa glycoprotein from Homo sapiens (Human).